Reading from the N-terminus, the 1118-residue chain is MKKANRSAGSVPKVSGISKPQTVEKSKSENSSSAPTGGKPVKPGAAAALSKTKSNDDLLAGMAGGVNVTNGVKAKKSNCSSAAPSAPAPAMTISESKSKSSTGTSSSAKRSTSAGNKESSSTRERLRERTRLNQSKKLPSVSQGANDVALAKRSRSRTATEGDIRMSKSKSDNQISDKAALEAKVKDLLTLAKTKDVEILHLRNELRDMRAQLGISEDHCEGEDRSEEKETIIAHQPTDVESTLLQLQEQNTAIREELNQLKNENRMLKDRLNALGFSLEQRLDNSEKLFGYQSLSPEITPGNQSDGGGTLTSSVEGSAPGSVEDLLSQDENTLMAHQHSNSMDNLDSECSEVYQPLTSSDDALDAPSSSESEGVPSIERSRKGSSGNASEVSVACLTERIHQMEENQHSTSEELQATLQELADLQQITQELNSENERLGEEKVILMESLCQQSDKLEHFGRQIEYFRSLLDEHHISYVIDEDVKSGRYMELEQRYMDLAENARFEREQLLGVQQHLSNTLKMAEQDNKEAQEMIGALKERSHHMERIIESEQKGKAALAATLEEYKATVASDQIEMNRLKAQLEKEKQKVAELYSIHNSGDKSDIQDLLESVRLDKEKAETLASSLQEDLAHTRNDANRLQDTIAKVEDEYRAFQEEAKKQIEDLNMTLEKLRSELEEKETERSDMKETIFELEDEVEQHRAVKLHDNLIISDLENTVKKLQDQKHDLERENKTLHRRLREESAEWRQFQADLQTAVVIANDIKSEAQEEIGDLKRRLHEAQEKNEKLTKELEEIKSRKQEEERGRVYNYMNAVERDLAALRQGMGLSRRSSTSSEPTPTVKTLIKSFDSASQVPNAAAAAIPRTPLSPSPMKTPPAAAVSPMQRHSISGPVSTSKPLTALSDKRSNYGEIPGQEHLLRTSSTSRPASLPRVPAMESAKTISVSRRSSEEMKRDISASEGASPASLMAMGTTSPQLSLSSSPTASVTPSTRSRIREERKDPLSALAREYGGSKRNALLKWCQKKTEGYQNIDITNFSSSWNDGLAFCALLHTYLPAHIPYQELNSQEKKRNFTLAFQAAESVGIKSTLDINEMARTERPDWQNVMLYVTAIYKYFET.

4 disordered regions span residues 1-50, 75-175, 294-324, and 359-391; these read MKKA…AALS, KKSN…DNQI, SLSPEITPGNQSDGGGTLTSSVEGSAPGSVE, and SSDDALDAPSSSESEGVPSIERSRKGSSGNASE. Composition is skewed to low complexity over residues 34–48, 80–90, and 99–113; these read APTGGKPVKPGAAAA, SSAAPSAPAPA, and KSSTGTSSSAKRSTS. The span at 120–131 shows a compositional bias: basic and acidic residues; that stretch reads SSTRERLRERTR. Polar residues predominate over residues 133 to 145; that stretch reads NQSKKLPSVSQGA. Over residues 158 to 171 the composition is skewed to basic and acidic residues; the sequence is TATEGDIRMSKSKS. Residues 168–281 adopt a coiled-coil conformation; sequence KSKSDNQISD…LNALGFSLEQ (114 aa). Polar residues predominate over residues 294–304; the sequence is SLSPEITPGNQ. Positions 359-373 are enriched in low complexity; sequence SSDDALDAPSSSESE. Ser-385, Ser-386, and Ser-390 each carry phosphoserine. 2 coiled-coil regions span residues 395–450 and 488–808; these read ACLT…MESL and RYME…RGRV. Phosphoserine is present on residues Ser-869, Ser-882, and Ser-888. Positions 916 to 999 are disordered; that stretch reads EHLLRTSSTS…STRSRIREER (84 aa). Residues 947-957 are compositionally biased toward basic and acidic residues; sequence RSSEEMKRDIS. Residues 972–992 show a composition bias toward low complexity; it reads TTSPQLSLSSSPTASVTPSTR. Residues 1012–1117 enclose the Calponin-homology (CH) domain; that stretch reads GSKRNALLKW…YVTAIYKYFE (106 aa).

It belongs to the cytospin-A family. May interact with both microtubules and actin cytoskeleton.

The protein resides in the cytoplasm. It localises to the cytoskeleton. It is found in the spindle. Its subcellular location is the cell junction. The protein localises to the gap junction. Its function is as follows. Involved in cytokinesis and spindle organization. May play a role in actin cytoskeleton organization and microtubule stabilization and hence required for proper cell adhesion and migration. The sequence is that of Cytospin-A (Specc1l) from Rattus norvegicus (Rat).